The following is a 160-amino-acid chain: Phosphopantetheine adenylyltransferase (160 aa).

Position 10 (serine 10) interacts with substrate. Residues 10–11 (SF) and histidine 18 contribute to the ATP site. Residues lysine 42, threonine 74, and arginine 88 each coordinate substrate. Residues 89 to 91 (GLR), glutamate 99, and 124 to 130 (YSFVSST) contribute to the ATP site.

Belongs to the bacterial CoaD family. In terms of assembly, homohexamer. Requires Mg(2+) as cofactor.

Its subcellular location is the cytoplasm. It catalyses the reaction (R)-4'-phosphopantetheine + ATP + H(+) = 3'-dephospho-CoA + diphosphate. It participates in cofactor biosynthesis; coenzyme A biosynthesis; CoA from (R)-pantothenate: step 4/5. In terms of biological role, reversibly transfers an adenylyl group from ATP to 4'-phosphopantetheine, yielding dephospho-CoA (dPCoA) and pyrophosphate. This is Phosphopantetheine adenylyltransferase from Leptospira biflexa serovar Patoc (strain Patoc 1 / Ames).